A 520-amino-acid chain; its full sequence is Apolipoprotein N-acyltransferase (520 aa).

Transmembrane regions (helical) follow at residues I12–F32, D33–E53, L58–V78, V93–I113, A122–F142, V168–I188, and W193–S213. The CN hydrolase domain occupies A232 to A479. The active-site Proton acceptor is the E272. K338 is an active-site residue. The active-site Nucleophile is the C390. A helical membrane pass occupies residues T484–M504.

It belongs to the CN hydrolase family. Apolipoprotein N-acyltransferase subfamily.

It is found in the cell inner membrane. It carries out the reaction N-terminal S-1,2-diacyl-sn-glyceryl-L-cysteinyl-[lipoprotein] + a glycerophospholipid = N-acyl-S-1,2-diacyl-sn-glyceryl-L-cysteinyl-[lipoprotein] + a 2-acyl-sn-glycero-3-phospholipid + H(+). It participates in protein modification; lipoprotein biosynthesis (N-acyl transfer). Functionally, catalyzes the phospholipid dependent N-acylation of the N-terminal cysteine of apolipoprotein, the last step in lipoprotein maturation. The polypeptide is Apolipoprotein N-acyltransferase (Pasteurella multocida (strain Pm70)).